The primary structure comprises 291 residues: MASKQLKLVIITGMSGAGKTVAMQSLEDLGYFCVDNLPPSLLPKFWELMKESDKMDKIALVMDLRGREFFDSIEPALDELDNTNFITTKILFLEADDKVLVSRYKETRRHHPLEPNGSVLDGINAERELLSDLKGRSQLVINTSNMAPRELRERINNEFQTEDKDVFNVQLMSFGFKYGIPIDADLVFDVRFLPNPHYIDKMRPLTGLDEDVYEYVMKWPETMAFLDKLVDLLMFTLPFYKREGKTQLVIAIGCTGGQHRSVALTEYVGKAIQQKYETTISHRDMKRRKER.

Position 13-20 (13-20) interacts with ATP; that stretch reads GMSGAGKT. A GTP-binding site is contributed by 63–66; it reads DLRG.

It belongs to the RapZ-like family.

Its function is as follows. Displays ATPase and GTPase activities. This Listeria innocua serovar 6a (strain ATCC BAA-680 / CLIP 11262) protein is Nucleotide-binding protein lin2617.